A 119-amino-acid polypeptide reads, in one-letter code: Nascent polypeptide-associated complex protein (119 aa).

An NAC-A/B domain is found at 5–73 (RMNSREMRRL…FRETPKKQEG (69 aa)).

This sequence belongs to the NAC-alpha family. As to quaternary structure, homodimer. Interacts with the ribosome. Binds ribosomal RNA.

In terms of biological role, contacts the emerging nascent chain on the ribosome. In Thermoplasma volcanium (strain ATCC 51530 / DSM 4299 / JCM 9571 / NBRC 15438 / GSS1), this protein is Nascent polypeptide-associated complex protein.